Reading from the N-terminus, the 413-residue chain is Phosphoglycerate kinase (413 aa).

Residues 24-26, Arg-39, 62-65, Arg-123, and Arg-165 each bind substrate; these read DFN and HLSR. ATP-binding positions include Lys-216, Glu-343, and 369–372; that span reads GGDS.

The protein belongs to the phosphoglycerate kinase family. As to quaternary structure, monomer.

It localises to the cytoplasm. The enzyme catalyses (2R)-3-phosphoglycerate + ATP = (2R)-3-phospho-glyceroyl phosphate + ADP. It functions in the pathway carbohydrate degradation; glycolysis; pyruvate from D-glyceraldehyde 3-phosphate: step 2/5. This Mycoplasmoides gallisepticum (strain R(low / passage 15 / clone 2)) (Mycoplasma gallisepticum) protein is Phosphoglycerate kinase.